The sequence spans 400 residues: Enoyl-[acyl-carrier-protein] reductase [NADH] (400 aa).

NAD(+)-binding positions include 48–53 (GASTGY), 74–75 (FE), 111–112 (DA), and 139–140 (LA). Substrate is bound at residue Tyr-225. Tyr-235 serves as the catalytic Proton donor. Residues Lys-244 and 273-275 (VVT) contribute to the NAD(+) site.

The protein belongs to the TER reductase family. As to quaternary structure, monomer.

It carries out the reaction a 2,3-saturated acyl-[ACP] + NAD(+) = a (2E)-enoyl-[ACP] + NADH + H(+). The protein operates within lipid metabolism; fatty acid biosynthesis. Involved in the final reduction of the elongation cycle of fatty acid synthesis (FAS II). Catalyzes the reduction of a carbon-carbon double bond in an enoyl moiety that is covalently linked to an acyl carrier protein (ACP). The polypeptide is Enoyl-[acyl-carrier-protein] reductase [NADH] (Burkholderia ambifaria (strain ATCC BAA-244 / DSM 16087 / CCUG 44356 / LMG 19182 / AMMD) (Burkholderia cepacia (strain AMMD))).